Reading from the N-terminus, the 386-residue chain is UDP-N-acetylbacillosamine transaminase (386 aa).

Substrate contacts are provided by residues 25–28 (NYIA), alanine 56, and serine 179. Lysine 184 bears the N6-(pyridoxal phosphate)lysine mark. Substrate-binding positions include asparagine 227 and 325–328 (QIET).

This sequence belongs to the DegT/DnrJ/EryC1 family. Pyridoxal 5'-phosphate serves as cofactor.

It carries out the reaction UDP-N-acetylbacillosamine + 2-oxoglutarate = UDP-2-acetamido-2,6-dideoxy-alpha-D-xylo-hex-4-ulose + L-glutamate. Its pathway is protein modification; protein glycosylation. Functionally, aminotransferase involved in the bacillosamine biosynthesis pathway by producing UDP-4-amino-4,6-dideoxy-alpha-D-GlcNAc (UDP-2-acetamido-4-amino-2,4,6-trideoxy-alpha-D-glucopyranose), a precursor used in the production of the glycan component 2,4-diacetamido-2,4,6-trideoxy-alpha-D-glucopyranose. Required for host colonization and virulence. Involved in the N-linked protein glycosylation pathway. The chain is UDP-N-acetylbacillosamine transaminase (pglE) from Campylobacter jejuni subsp. jejuni serotype O:2 (strain ATCC 700819 / NCTC 11168).